Reading from the N-terminus, the 498-residue chain is Glutamate--tRNA ligase (498 aa).

A 'HIGH' region motif is present at residues 10–20; sequence PSPTGYFHIGG. The 'KMSKS' region signature appears at 252 to 256; the sequence is KLSKR. Lys-255 provides a ligand contact to ATP.

It belongs to the class-I aminoacyl-tRNA synthetase family. Glutamate--tRNA ligase type 1 subfamily. As to quaternary structure, monomer.

It is found in the cytoplasm. It catalyses the reaction tRNA(Glu) + L-glutamate + ATP = L-glutamyl-tRNA(Glu) + AMP + diphosphate. Functionally, catalyzes the attachment of glutamate to tRNA(Glu) in a two-step reaction: glutamate is first activated by ATP to form Glu-AMP and then transferred to the acceptor end of tRNA(Glu). The chain is Glutamate--tRNA ligase from Mycoplasmoides gallisepticum (strain R(low / passage 15 / clone 2)) (Mycoplasma gallisepticum).